The following is a 282-amino-acid chain: Phosphatidylserine decarboxylase proenzyme (282 aa).

Residues aspartate 89, histidine 145, and serine 249 each act as charge relay system; for autoendoproteolytic cleavage activity in the active site. Serine 249 (schiff-base intermediate with substrate; via pyruvic acid; for decarboxylase activity) is an active-site residue. Serine 249 carries the post-translational modification Pyruvic acid (Ser); by autocatalysis.

The protein belongs to the phosphatidylserine decarboxylase family. PSD-B subfamily. Prokaryotic type I sub-subfamily. In terms of assembly, heterodimer of a large membrane-associated beta subunit and a small pyruvoyl-containing alpha subunit. Requires pyruvate as cofactor. Is synthesized initially as an inactive proenzyme. Formation of the active enzyme involves a self-maturation process in which the active site pyruvoyl group is generated from an internal serine residue via an autocatalytic post-translational modification. Two non-identical subunits are generated from the proenzyme in this reaction, and the pyruvate is formed at the N-terminus of the alpha chain, which is derived from the carboxyl end of the proenzyme. The autoendoproteolytic cleavage occurs by a canonical serine protease mechanism, in which the side chain hydroxyl group of the serine supplies its oxygen atom to form the C-terminus of the beta chain, while the remainder of the serine residue undergoes an oxidative deamination to produce ammonia and the pyruvoyl prosthetic group on the alpha chain. During this reaction, the Ser that is part of the protease active site of the proenzyme becomes the pyruvoyl prosthetic group, which constitutes an essential element of the active site of the mature decarboxylase.

It is found in the cell membrane. It carries out the reaction a 1,2-diacyl-sn-glycero-3-phospho-L-serine + H(+) = a 1,2-diacyl-sn-glycero-3-phosphoethanolamine + CO2. Its pathway is phospholipid metabolism; phosphatidylethanolamine biosynthesis; phosphatidylethanolamine from CDP-diacylglycerol: step 2/2. In terms of biological role, catalyzes the formation of phosphatidylethanolamine (PtdEtn) from phosphatidylserine (PtdSer). This is Phosphatidylserine decarboxylase proenzyme from Anaeromyxobacter sp. (strain K).